Consider the following 1086-residue polypeptide: DNA polymerase delta catalytic subunit (1086 aa).

A disordered region spans residues M1–A64. Residues E29–S58 are compositionally biased toward basic and acidic residues. C993, C996, C1008, and C1011 together coordinate Zn(2+). The segment at C993–C1011 adopts a CysA-type zinc-finger fold. 4 residues coordinate [4Fe-4S] cluster: C1040, C1043, C1053, and C1058. A CysB motif motif is present at residues C1040–C1058.

This sequence belongs to the DNA polymerase type-B family. Heterotetramer that consist of the pol3, cdc1, cdc27 and cdm1 subunits. The pol3 subunit contains the polymerase active site and most likely the active site for the 3'-5' exonuclease activity. It depends on [4Fe-4S] cluster as a cofactor.

It localises to the nucleus. It carries out the reaction DNA(n) + a 2'-deoxyribonucleoside 5'-triphosphate = DNA(n+1) + diphosphate. Catalytic component of DNA polymerase delta (DNA polymerase III) which participates in chromosomal DNA replication. Required during synthesis of the lagging DNA strands at the replication fork, binds at/or near replication origins and moves along DNA with the replication fork. Participates in leading strand synthesis during replication initiation and termination. Has 3'-5' proofreading exonuclease activity that corrects errors arising during DNA replication. The sequence is that of DNA polymerase delta catalytic subunit (pol3) from Schizosaccharomyces pombe (strain 972 / ATCC 24843) (Fission yeast).